Reading from the N-terminus, the 223-residue chain is Protein FAM3D (223 aa).

The N-terminal stretch at 1-25 (MRVAGLIRVVVFIFTIVTMWVFLRS) is a signal peptide. Cystine bridges form between cysteine 54/cysteine 82 and cysteine 60/cysteine 217. The 160-residue stretch at 62 to 221 (NNFFAFKISS…LELEGCVPRK (160 aa)) folds into the GG-type lectin domain. The N-linked (GlcNAc...) asparagine glycan is linked to asparagine 106.

It belongs to the FAM3 family.

Its subcellular location is the secreted. This is Protein FAM3D from Mus musculus (Mouse).